The primary structure comprises 920 residues: Dynamin-2B (920 aa).

Residue Met1 is modified to N-acetylmethionine. The region spanning 35–303 (PATSLNVVAL…IRSRMKLRLP (269 aa)) is the Dynamin-type G domain. The G1 motif stretch occupies residues 45–52 (GNVGAGKS). 45–53 (GNVGAGKSA) is a GTP binding site. The G2 motif stretch occupies residues 71–73 (ATR). The G3 motif stretch occupies residues 143–146 (DLPG). The tract at residues 204–207 (SKID) is G4 motif. 204–210 (SKIDQAA) contributes to the GTP binding site. The G5 motif stretch occupies residues 238 to 241 (ALIG). 246–249 (IASA) lines the GTP pocket. Positions 507–522 (RREEELKGRSSKKGQD) are enriched in basic and acidic residues. Disordered stretches follow at residues 507–577 (RREE…TAGP) and 632–657 (IEEI…PDSK). The segment covering 523-545 (AEQSLLNRATSPQPDGPSSTGGS) has biased composition (polar residues). 2 stretches are compositionally biased toward basic and acidic residues: residues 548–567 (SLRD…KETP) and 641–652 (EKSKSSKDKKSN). In terms of domain architecture, PH spans 579–703 (GEITAGYLMK…WINKLQKVIQ (125 aa)). The GED domain occupies 737 to 830 (LRWMSQEVRG…QLSIHDNRAA (94 aa)). The segment at 747–761 (YVEAVLNSLAANVPK) is important for homodimerization. Residues 788 to 812 (NERIESLIQEDQNVKRRRDRYQKQS) adopt a coiled-coil conformation. The tract at residues 828 to 920 (RAAAASSWSD…PPQSGSSYRY (93 aa)) is disordered. Residues 833–849 (SSWSDNSGTESSPRTNG) are compositionally biased toward polar residues.

It belongs to the TRAFAC class dynamin-like GTPase superfamily. Dynamin/Fzo/YdjA family. In terms of assembly, interacts with DRP1A at the plasma membrane and in forming clathrin-coated vesicles (CCV). As to expression, ubiquitous. Preferentially expressed in siliques.

It localises to the cytoplasm. It is found in the cytoskeleton. Its subcellular location is the cytoplasmic vesicle. The protein localises to the clathrin-coated vesicle. The protein resides in the cell membrane. It carries out the reaction GTP + H2O = GDP + phosphate + H(+). Functionally, putative microtubule-associated force-producing protein, able to bind and hydrolyze GTP. Collaboratively with DRP1A, participates in clathrin-coated vesicle formation during endocytosis. With DRP1A and PIP5K3, required for the precise coordination of polar ARAC3/ROP6 and ARAC4/ROP2 placement and subsequent root hair positioning during planar polarity formation in root hair-forming cells. The chain is Dynamin-2B from Arabidopsis thaliana (Mouse-ear cress).